The chain runs to 822 residues: Nuclear factor of activated T-cells, cytoplasmic 1 (822 aa).

The tract at residues 110–115 is calcineurin-binding; sequence PRIEIT. The interval 118–210 is transactivation domain A (TAD-A); the sequence is LGLHHNNGQF…CVSPKTTDPE (93 aa). Residues 192–206 are compositionally biased toward polar residues; it reads PQTSPWQSPCVSPKT. Residues 192-289 form a disordered region; it reads PQTSPWQSPC…HSSPRVSVTD (98 aa). 2 repeat units span residues 195-211 and 225-241. The segment at 195 to 290 is 3 X SP repeats; it reads SPWQSPCVSP…SSPRVSVTDD (96 aa). Phosphoserine is present on residues serine 225 and serine 229. Over residues 225–242 the composition is skewed to low complexity; the sequence is SPRHSPSTSPRTSVTEES. Serine 237 carries the post-translational modification Phosphoserine; by PKA. Positions 257 to 259 match the Nuclear localization signal motif; the sequence is KRK. Residues 274–290 form repeat 3; that stretch reads SPTPSPHSSPRVSVTDD. Serine 286 is subject to Phosphoserine; by PKA. The Nuclear export signal motif lies at 302 to 313; the sequence is SAIVAAINALST. In terms of domain architecture, RHD spans 400 to 582; the sequence is PSLPALDWQL…NPIECSQRSA (183 aa). The DNA-binding element occupies 429 to 436; that stretch reads RAHYETEG. Residues 672–674 carry the Nuclear localization signal motif; that stretch reads KRK. The tract at residues 772–822 is disordered; sequence GPGHLGLQRPAGGVLGGQEAPRPGGPHPGAPQLHPLNLSQSIVTRLTEPQP. Residues 808–822 are compositionally biased toward polar residues; sequence NLSQSIVTRLTEPQP.

In terms of assembly, member of the multicomponent NFATC transcription complex that consists of at least two components, a pre-existing cytoplasmic component NFATC2 and an inducible nuclear component NFATC1. Other members such as NFATC4, NFATC3 or members of the activating protein-1 family, MAF, GATA4 and Cbp/p300 can also bind the complex. NFATC proteins bind to DNA as monomers. Interacts with HOMER2 and HOMER3; this interaction may compete with calcineurin/PPP3CA-binding and hence prevent NFATC1 dephosphorylation and activation. Interacts with TLE6/GRG6. Phosphorylated by NFATC-kinase and GSK3B; phosphorylation induces NFATC1 nuclear exit and dephosphorylation by calcineurin promotes nuclear import. Phosphorylation by PKA and DYRK2 negatively modulates nuclear accumulation, and promotes subsequent phosphorylation by GSK3B or casein kinase 1.

The protein localises to the cytoplasm. It is found in the nucleus. Functionally, plays a role in the inducible expression of cytokine genes in T-cells, especially in the induction of the IL-2 or IL-4 gene transcription. Also controls gene expression in embryonic cardiac cells. Could regulate not only the activation and proliferation but also the differentiation and programmed death of T-lymphocytes as well as lymphoid and non-lymphoid cells. Required for osteoclastogenesis and regulates many genes important for osteoclast differentiation and function. The polypeptide is Nuclear factor of activated T-cells, cytoplasmic 1 (NFATC1) (Sus scrofa (Pig)).